A 211-amino-acid polypeptide reads, in one-letter code: Thiamine-phosphate synthase (211 aa).

4-amino-2-methyl-5-(diphosphooxymethyl)pyrimidine is bound by residues 37–41 (QLRIK) and asparagine 69. The Mg(2+) site is built by aspartate 70 and aspartate 89. 4-amino-2-methyl-5-(diphosphooxymethyl)pyrimidine is bound at residue serine 108. 134–136 (TQT) is a binding site for 2-[(2R,5Z)-2-carboxy-4-methylthiazol-5(2H)-ylidene]ethyl phosphate. Lysine 137 serves as a coordination point for 4-amino-2-methyl-5-(diphosphooxymethyl)pyrimidine. 2-[(2R,5Z)-2-carboxy-4-methylthiazol-5(2H)-ylidene]ethyl phosphate is bound by residues glycine 166 and 186–187 (VS).

This sequence belongs to the thiamine-phosphate synthase family. Mg(2+) serves as cofactor.

The enzyme catalyses 2-[(2R,5Z)-2-carboxy-4-methylthiazol-5(2H)-ylidene]ethyl phosphate + 4-amino-2-methyl-5-(diphosphooxymethyl)pyrimidine + 2 H(+) = thiamine phosphate + CO2 + diphosphate. It carries out the reaction 2-(2-carboxy-4-methylthiazol-5-yl)ethyl phosphate + 4-amino-2-methyl-5-(diphosphooxymethyl)pyrimidine + 2 H(+) = thiamine phosphate + CO2 + diphosphate. The catalysed reaction is 4-methyl-5-(2-phosphooxyethyl)-thiazole + 4-amino-2-methyl-5-(diphosphooxymethyl)pyrimidine + H(+) = thiamine phosphate + diphosphate. It participates in cofactor biosynthesis; thiamine diphosphate biosynthesis; thiamine phosphate from 4-amino-2-methyl-5-diphosphomethylpyrimidine and 4-methyl-5-(2-phosphoethyl)-thiazole: step 1/1. Its function is as follows. Condenses 4-methyl-5-(beta-hydroxyethyl)thiazole monophosphate (THZ-P) and 2-methyl-4-amino-5-hydroxymethyl pyrimidine pyrophosphate (HMP-PP) to form thiamine monophosphate (TMP). The protein is Thiamine-phosphate synthase of Escherichia coli O139:H28 (strain E24377A / ETEC).